Here is a 103-residue protein sequence, read N- to C-terminus: Sec-independent protein translocase protein TatA (103 aa).

Residues 1 to 21 (MSLGPWEIAIIVLLIIVLFGA) traverse the membrane as a helical segment. The disordered stretch occupies residues 42–103 (VKEMQKDDET…QNYEDPNRTP (62 aa)). The span at 52–90 (PAQPEQQPQGYQHPQQIEAPQNLQQPNFQQHYQNQPQQP) shows a compositional bias: low complexity. The segment covering 94–103 (QNYEDPNRTP) has biased composition (basic and acidic residues).

It belongs to the TatA/E family. In terms of assembly, the Tat system comprises two distinct complexes: a TatABC complex, containing multiple copies of TatA, TatB and TatC subunits, and a separate TatA complex, containing only TatA subunits. Substrates initially bind to the TatABC complex, which probably triggers association of the separate TatA complex to form the active translocon.

The protein localises to the cell membrane. Its function is as follows. Part of the twin-arginine translocation (Tat) system that transports large folded proteins containing a characteristic twin-arginine motif in their signal peptide across membranes. TatA could form the protein-conducting channel of the Tat system. In Corynebacterium efficiens (strain DSM 44549 / YS-314 / AJ 12310 / JCM 11189 / NBRC 100395), this protein is Sec-independent protein translocase protein TatA.